The sequence spans 107 residues: Large ribosomal subunit protein uL24 (107 aa).

Belongs to the universal ribosomal protein uL24 family. In terms of assembly, part of the 50S ribosomal subunit.

Functionally, one of two assembly initiator proteins, it binds directly to the 5'-end of the 23S rRNA, where it nucleates assembly of the 50S subunit. One of the proteins that surrounds the polypeptide exit tunnel on the outside of the subunit. This Gluconacetobacter diazotrophicus (strain ATCC 49037 / DSM 5601 / CCUG 37298 / CIP 103539 / LMG 7603 / PAl5) protein is Large ribosomal subunit protein uL24.